The following is a 357-amino-acid chain: UDP-N-acetylglucosamine--N-acetylmuramyl-(pentapeptide) pyrophosphoryl-undecaprenol N-acetylglucosamine transferase (357 aa).

UDP-N-acetyl-alpha-D-glucosamine contacts are provided by residues 14-16 (SGG), N125, S190, and Q290.

It belongs to the glycosyltransferase 28 family. MurG subfamily.

Its subcellular location is the cell inner membrane. It carries out the reaction di-trans,octa-cis-undecaprenyl diphospho-N-acetyl-alpha-D-muramoyl-L-alanyl-D-glutamyl-meso-2,6-diaminopimeloyl-D-alanyl-D-alanine + UDP-N-acetyl-alpha-D-glucosamine = di-trans,octa-cis-undecaprenyl diphospho-[N-acetyl-alpha-D-glucosaminyl-(1-&gt;4)]-N-acetyl-alpha-D-muramoyl-L-alanyl-D-glutamyl-meso-2,6-diaminopimeloyl-D-alanyl-D-alanine + UDP + H(+). It participates in cell wall biogenesis; peptidoglycan biosynthesis. Its function is as follows. Cell wall formation. Catalyzes the transfer of a GlcNAc subunit on undecaprenyl-pyrophosphoryl-MurNAc-pentapeptide (lipid intermediate I) to form undecaprenyl-pyrophosphoryl-MurNAc-(pentapeptide)GlcNAc (lipid intermediate II). This chain is UDP-N-acetylglucosamine--N-acetylmuramyl-(pentapeptide) pyrophosphoryl-undecaprenol N-acetylglucosamine transferase, found in Chlamydia felis (strain Fe/C-56) (Chlamydophila felis).